The chain runs to 266 residues: Vitamin B12-binding protein (266 aa).

A signal peptide spans 1 to 22 (MAKQMFRALVALLLTLPVWLYA). A Fe/B12 periplasmic-binding domain is found at 25-266 (RVITLSPANT…QLCNALSQVN (242 aa)). Residues Tyr50 and 242–246 (DWFER) contribute to the cyanocob(III)alamin site. Cys183 and Cys259 are joined by a disulfide.

This sequence belongs to the BtuF family. The complex is composed of two ATP-binding proteins (BtuD), two transmembrane proteins (BtuC) and a solute-binding protein (BtuF).

Its subcellular location is the periplasm. In terms of biological role, part of the ABC transporter complex BtuCDF involved in vitamin B12 import. Binds vitamin B12 and delivers it to the periplasmic surface of BtuC. This Salmonella paratyphi A (strain ATCC 9150 / SARB42) protein is Vitamin B12-binding protein.